Consider the following 77-residue polypeptide: Small ribosomal subunit protein bS18 (77 aa).

It belongs to the bacterial ribosomal protein bS18 family. As to quaternary structure, part of the 30S ribosomal subunit. Forms a tight heterodimer with protein bS6.

In terms of biological role, binds as a heterodimer with protein bS6 to the central domain of the 16S rRNA, where it helps stabilize the platform of the 30S subunit. The sequence is that of Small ribosomal subunit protein bS18 from Lactobacillus gasseri (strain ATCC 33323 / DSM 20243 / BCRC 14619 / CIP 102991 / JCM 1131 / KCTC 3163 / NCIMB 11718 / NCTC 13722 / AM63).